A 483-amino-acid chain; its full sequence is Homoserine O-acetyltransferase (483 aa).

The AB hydrolase-1 domain occupies 47-346 (NVILICHALT…HFGHDAFLLE (300 aa)). Ser152 (nucleophile) is an active-site residue. Substrate is bound at residue Arg221. Catalysis depends on residues Asp307 and His340. Residue Asp341 participates in substrate binding. 2 consecutive CBS domains span residues 367-423 (MSED…KISS) and 428-483 (LSRD…KGTK).

It belongs to the AB hydrolase superfamily. MetX family. As to quaternary structure, homodimer.

It localises to the cytoplasm. It carries out the reaction L-homoserine + acetyl-CoA = O-acetyl-L-homoserine + CoA. Its pathway is amino-acid biosynthesis; L-methionine biosynthesis via de novo pathway; O-acetyl-L-homoserine from L-homoserine: step 1/1. In terms of biological role, transfers an acetyl group from acetyl-CoA to L-homoserine, forming acetyl-L-homoserine. This Methanohalophilus mahii (strain ATCC 35705 / DSM 5219 / SLP) protein is Homoserine O-acetyltransferase.